The primary structure comprises 492 residues: Protein nucleotidyltransferase YdiU (492 aa).

ATP-binding residues include glycine 88, glycine 90, arginine 91, lysine 111, aspartate 123, glycine 124, arginine 174, and arginine 181. Aspartate 250 functions as the Proton acceptor in the catalytic mechanism. Mg(2+) is bound by residues asparagine 251 and aspartate 260. Aspartate 260 is an ATP binding site.

It belongs to the SELO family. Mg(2+) is required as a cofactor. Mn(2+) serves as cofactor.

The enzyme catalyses L-seryl-[protein] + ATP = 3-O-(5'-adenylyl)-L-seryl-[protein] + diphosphate. The catalysed reaction is L-threonyl-[protein] + ATP = 3-O-(5'-adenylyl)-L-threonyl-[protein] + diphosphate. It catalyses the reaction L-tyrosyl-[protein] + ATP = O-(5'-adenylyl)-L-tyrosyl-[protein] + diphosphate. It carries out the reaction L-histidyl-[protein] + UTP = N(tele)-(5'-uridylyl)-L-histidyl-[protein] + diphosphate. The enzyme catalyses L-seryl-[protein] + UTP = O-(5'-uridylyl)-L-seryl-[protein] + diphosphate. The catalysed reaction is L-tyrosyl-[protein] + UTP = O-(5'-uridylyl)-L-tyrosyl-[protein] + diphosphate. Nucleotidyltransferase involved in the post-translational modification of proteins. It can catalyze the addition of adenosine monophosphate (AMP) or uridine monophosphate (UMP) to a protein, resulting in modifications known as AMPylation and UMPylation. In Rhodopseudomonas palustris (strain HaA2), this protein is Protein nucleotidyltransferase YdiU.